The chain runs to 71 residues: Sec-independent protein translocase protein TatA (71 aa).

A helical transmembrane segment spans residues 9–29 (LLLILAIVVILFGASRLPALG). The tract at residues 43–71 (FGGEDEKPTASGNGSTPTQSSSDQGSKQA) is disordered. Over residues 52-71 (ASGNGSTPTQSSSDQGSKQA) the composition is skewed to polar residues.

Belongs to the TatA/E family. The Tat system comprises two distinct complexes: a TatABC complex, containing multiple copies of TatA, TatB and TatC subunits, and a separate TatA complex, containing only TatA subunits. Substrates initially bind to the TatABC complex, which probably triggers association of the separate TatA complex to form the active translocon.

The protein localises to the cell inner membrane. Functionally, part of the twin-arginine translocation (Tat) system that transports large folded proteins containing a characteristic twin-arginine motif in their signal peptide across membranes. TatA could form the protein-conducting channel of the Tat system. This Anaeromyxobacter dehalogenans (strain 2CP-C) protein is Sec-independent protein translocase protein TatA.